The primary structure comprises 212 residues: Uridine kinase (212 aa).

Residue 13–20 participates in ATP binding; sequence GGSGSGKT.

This sequence belongs to the uridine kinase family.

Its subcellular location is the cytoplasm. It catalyses the reaction uridine + ATP = UMP + ADP + H(+). It carries out the reaction cytidine + ATP = CMP + ADP + H(+). It participates in pyrimidine metabolism; CTP biosynthesis via salvage pathway; CTP from cytidine: step 1/3. Its pathway is pyrimidine metabolism; UMP biosynthesis via salvage pathway; UMP from uridine: step 1/1. This Bacillus mycoides (strain KBAB4) (Bacillus weihenstephanensis) protein is Uridine kinase.